Consider the following 378-residue polypeptide: Erythronate-4-phosphate dehydrogenase (378 aa).

2 residues coordinate substrate: serine 45 and threonine 66. NAD(+) is bound by residues aspartate 146 and threonine 175. The active site involves arginine 208. Aspartate 232 lines the NAD(+) pocket. Residue glutamate 237 is part of the active site. Histidine 254 acts as the Proton donor in catalysis. NAD(+) is bound at residue glycine 257. Tyrosine 258 contacts substrate.

Belongs to the D-isomer specific 2-hydroxyacid dehydrogenase family. PdxB subfamily. In terms of assembly, homodimer.

The protein resides in the cytoplasm. It catalyses the reaction 4-phospho-D-erythronate + NAD(+) = (R)-3-hydroxy-2-oxo-4-phosphooxybutanoate + NADH + H(+). It functions in the pathway cofactor biosynthesis; pyridoxine 5'-phosphate biosynthesis; pyridoxine 5'-phosphate from D-erythrose 4-phosphate: step 2/5. Catalyzes the oxidation of erythronate-4-phosphate to 3-hydroxy-2-oxo-4-phosphonooxybutanoate. This chain is Erythronate-4-phosphate dehydrogenase, found in Escherichia coli (strain ATCC 8739 / DSM 1576 / NBRC 3972 / NCIMB 8545 / WDCM 00012 / Crooks).